The following is a 123-amino-acid chain: MPTIQQLIRNARQPIENRKKSPALRGCPQRRGVCARVYTITPKKPNSALRKVARVRLTSGFEITAYIPGIDHNLQEHSVVLVRGGRVKDLPGVRYHIVRGTLDAAEVKDRQQGRSKYGVKKQK.

The protein belongs to the universal ribosomal protein uS12 family. As to quaternary structure, part of the 30S ribosomal subunit.

It is found in the plastid. The protein localises to the chloroplast. With S4 and S5 plays an important role in translational accuracy. Located at the interface of the 30S and 50S subunits. In Pinus thunbergii (Japanese black pine), this protein is Small ribosomal subunit protein uS12c (rps12).